The following is a 689-amino-acid chain: uncharacterized protein (689 aa).

It is found in the mitochondrion. This is an uncharacterized protein from Schizosaccharomyces pombe (strain 972 / ATCC 24843) (Fission yeast).